A 203-amino-acid chain; its full sequence is Snake venom metalloproteinase atroxase (203 aa).

The residue at position 1 (Glu1) is a Pyrrolidone carboxylic acid (Glu). Asn5 is a glycosylation site (N-linked (GlcNAc...) asparagine). The Peptidase M12B domain occupies 9–203; it reads RYIELVVVAD…KQYNPQIXNK (195 aa). Ca(2+) contacts are provided by Glu12 and Asp96. Position 145 (His145) interacts with Zn(2+). Residue Glu146 is part of the active site. Zn(2+)-binding residues include His149 and His155. A disulfide bond links Cys160 and Cys167. Asn202 contributes to the Ca(2+) binding site.

Belongs to the venom metalloproteinase (M12B) family. P-I subfamily. Monomer. Zn(2+) serves as cofactor. The N-terminus is blocked. In terms of tissue distribution, expressed by the venom gland.

It localises to the secreted. It catalyses the reaction Cleavage of 5-His-|-Leu-6, 9-Ser-|-His-10, 10-His-|-Leu-11, 14-Ala-|-Leu-15 and 16-Tyr-|-Leu-17 in insulin B chain.. With respect to regulation, inhibited by EDTA and alpha2-macroglobulin. Its function is as follows. Snake venom zinc metalloprotease that has Aalpha, Bbeta fibrin(ogen)olytic activities. It cleaves the Aalpha chain of fibrinogen first followed by the Bbeta chain and shows no effect on the gamma chain. Does not induce or inhibit platelet aggregation, and is unable to activate plasminogen. Exhibits low lethality when tested on mice. Intravenous administration results in thrombolysis within one hour followed by recanalization. Fibrinogenolytic activity results in a 60% decrease in the rat's plasma fibrinogen level. Histological examination of kidney, liver, heart and lung tissue shows no necrosis nor hemorrhage. The chain is Snake venom metalloproteinase atroxase from Crotalus atrox (Western diamondback rattlesnake).